Here is a 345-residue protein sequence, read N- to C-terminus: Fe(3+) ions import ATP-binding protein FbpC (345 aa).

In terms of domain architecture, ABC transporter spans 3 to 233; sequence LSLKAATVRF…PADEFVARFL (231 aa). ATP is bound at residue 35–42; the sequence is GPSGSGKS.

This sequence belongs to the ABC transporter superfamily. Fe(3+) ion importer (TC 3.A.1.10) family. The complex is composed of two ATP-binding proteins (FbpC), two transmembrane proteins (FbpB) and a solute-binding protein (FbpA).

The protein localises to the cell membrane. It catalyses the reaction Fe(3+)(out) + ATP + H2O = Fe(3+)(in) + ADP + phosphate + H(+). In terms of biological role, part of the ABC transporter complex FbpABC involved in Fe(3+) ions import. Responsible for energy coupling to the transport system. The sequence is that of Fe(3+) ions import ATP-binding protein FbpC from Streptomyces avermitilis (strain ATCC 31267 / DSM 46492 / JCM 5070 / NBRC 14893 / NCIMB 12804 / NRRL 8165 / MA-4680).